Consider the following 281-residue polypeptide: Nucleotide-binding protein PSHAa2554 (281 aa).

Residue 8-15 (GRSGSGKS) participates in ATP binding. A GTP-binding site is contributed by 56 to 59 (DVRN).

The protein belongs to the RapZ-like family.

Its function is as follows. Displays ATPase and GTPase activities. The polypeptide is Nucleotide-binding protein PSHAa2554 (Pseudoalteromonas translucida (strain TAC 125)).